The chain runs to 170 residues: Adenine phosphoribosyltransferase (170 aa).

It belongs to the purine/pyrimidine phosphoribosyltransferase family. In terms of assembly, homodimer.

It localises to the cytoplasm. The catalysed reaction is AMP + diphosphate = 5-phospho-alpha-D-ribose 1-diphosphate + adenine. It functions in the pathway purine metabolism; AMP biosynthesis via salvage pathway; AMP from adenine: step 1/1. Functionally, catalyzes a salvage reaction resulting in the formation of AMP, that is energically less costly than de novo synthesis. This is Adenine phosphoribosyltransferase from Carboxydothermus hydrogenoformans (strain ATCC BAA-161 / DSM 6008 / Z-2901).